The following is a 469-amino-acid chain: A-type ATP synthase subunit B (469 aa).

The protein belongs to the ATPase alpha/beta chains family. As to quaternary structure, has multiple subunits with at least A(3), B(3), C, D, E, F, H, I and proteolipid K(x).

It is found in the cell membrane. In terms of biological role, component of the A-type ATP synthase that produces ATP from ADP in the presence of a proton gradient across the membrane. The B chain is a regulatory subunit. The polypeptide is A-type ATP synthase subunit B (Staphylothermus marinus (strain ATCC 43588 / DSM 3639 / JCM 9404 / F1)).